The sequence spans 459 residues: Putrescine aminotransferase (459 aa).

Pyridoxal 5'-phosphate-binding positions include G150–T151 and Q274. N6-(pyridoxal phosphate)lysine is present on K300. T332 serves as a coordination point for pyridoxal 5'-phosphate.

It belongs to the class-III pyridoxal-phosphate-dependent aminotransferase family. Putrescine aminotransferase subfamily. It depends on pyridoxal 5'-phosphate as a cofactor.

It catalyses the reaction an alkane-alpha,omega-diamine + 2-oxoglutarate = an omega-aminoaldehyde + L-glutamate. It carries out the reaction putrescine + 2-oxoglutarate = 1-pyrroline + L-glutamate + H2O. The enzyme catalyses cadaverine + 2-oxoglutarate = 5-aminopentanal + L-glutamate. The protein operates within amine and polyamine degradation; putrescine degradation; 4-aminobutanal from putrescine (transaminase route): step 1/1. Its function is as follows. Catalyzes the aminotransferase reaction from putrescine to 2-oxoglutarate, leading to glutamate and 4-aminobutanal, which spontaneously cyclizes to form 1-pyrroline. This is the first step in one of two pathways for putrescine degradation, where putrescine is converted into 4-aminobutanoate (gamma-aminobutyrate or GABA) via 4-aminobutanal. Also functions as a cadaverine transaminase in a a L-lysine degradation pathway to succinate that proceeds via cadaverine, glutarate and L-2-hydroxyglutarate. This chain is Putrescine aminotransferase, found in Escherichia coli O8 (strain IAI1).